Consider the following 228-residue polypeptide: Adapter protein MecA (228 aa).

Belongs to the MecA family. In terms of assembly, homodimer.

Enables the recognition and targeting of unfolded and aggregated proteins to the ClpC protease or to other proteins involved in proteolysis. This chain is Adapter protein MecA, found in Lacticaseibacillus paracasei (strain ATCC 334 / BCRC 17002 / CCUG 31169 / CIP 107868 / KCTC 3260 / NRRL B-441) (Lactobacillus paracasei).